The following is a 393-amino-acid chain: Riboflavin biosynthesis protein RibBA (393 aa).

The DHBP synthase stretch occupies residues 1 to 200 (MEFDEIKDAL…IESLVNYQKD (200 aa)). Residues 27–28 (RE), aspartate 32, 139–143 (RTGHT), and glutamate 163 contribute to the D-ribulose 5-phosphate site. Glutamate 28 contributes to the Mg(2+) binding site. Residue histidine 142 coordinates Mg(2+). The interval 201–393 (KDTSVELKAK…TKKIKMGHLI (193 aa)) is GTP cyclohydrolase II. Residue 249 to 253 (RIHSA) coordinates GTP. Cysteine 254, cysteine 265, and cysteine 267 together coordinate Zn(2+). GTP contacts are provided by residues glutamine 270, 291 to 293 (EGR), and threonine 313. Aspartate 325 functions as the Proton acceptor; for GTP cyclohydrolase activity in the catalytic mechanism. The Nucleophile; for GTP cyclohydrolase activity role is filled by arginine 327. Residues serine 348 and lysine 353 each coordinate GTP.

This sequence in the N-terminal section; belongs to the DHBP synthase family. In the C-terminal section; belongs to the GTP cyclohydrolase II family. Mg(2+) serves as cofactor. Requires Mn(2+) as cofactor. It depends on Zn(2+) as a cofactor.

The enzyme catalyses D-ribulose 5-phosphate = (2S)-2-hydroxy-3-oxobutyl phosphate + formate + H(+). It carries out the reaction GTP + 4 H2O = 2,5-diamino-6-hydroxy-4-(5-phosphoribosylamino)-pyrimidine + formate + 2 phosphate + 3 H(+). Its pathway is cofactor biosynthesis; riboflavin biosynthesis; 2-hydroxy-3-oxobutyl phosphate from D-ribulose 5-phosphate: step 1/1. It participates in cofactor biosynthesis; riboflavin biosynthesis; 5-amino-6-(D-ribitylamino)uracil from GTP: step 1/4. Its function is as follows. Catalyzes the conversion of D-ribulose 5-phosphate to formate and 3,4-dihydroxy-2-butanone 4-phosphate. Catalyzes the conversion of GTP to 2,5-diamino-6-ribosylamino-4(3H)-pyrimidinone 5'-phosphate (DARP), formate and pyrophosphate. This chain is Riboflavin biosynthesis protein RibBA, found in Staphylococcus haemolyticus (strain JCSC1435).